A 202-amino-acid chain; its full sequence is Superoxide dismutase [Cu-Zn], chloroplastic (202 aa).

A chloroplast-targeting transit peptide spans M1–A48. Cu cation-binding residues include H94, H96, and H111. A disulfide bridge links C105 with C194. Zn(2+) contacts are provided by H111, H119, H128, and D131. H168 lines the Cu cation pocket.

Belongs to the Cu-Zn superoxide dismutase family. Homotetramer. Cu cation is required as a cofactor. Requires Zn(2+) as cofactor.

Its subcellular location is the plastid. It is found in the chloroplast. The catalysed reaction is 2 superoxide + 2 H(+) = H2O2 + O2. In terms of biological role, destroys radicals which are normally produced within the cells and which are toxic to biological systems. The protein is Superoxide dismutase [Cu-Zn], chloroplastic (SODCP) of Pisum sativum (Garden pea).